The primary structure comprises 233 residues: Small ribosomal subunit protein uS2 (233 aa).

It belongs to the universal ribosomal protein uS2 family.

The sequence is that of Small ribosomal subunit protein uS2 from Clostridium beijerinckii (strain ATCC 51743 / NCIMB 8052) (Clostridium acetobutylicum).